We begin with the raw amino-acid sequence, 759 residues long: Catalase-peroxidase (759 aa).

The tract at residues 1-24 (MTQDKCPFKEQSSQPNFAGGGTSN) is disordered. Residues 96–242 (WHSAGTYRVF…LAAAHMGLIY (147 aa)) constitute a cross-link (tryptophyl-tyrosyl-methioninium (Trp-Tyr) (with M-268)). Histidine 97 acts as the Proton acceptor in catalysis. The segment at residues 242–268 (YVNPEGPDGNPDPVAAAHDIRDTFGRM) is a cross-link (tryptophyl-tyrosyl-methioninium (Tyr-Met) (with W-96)). Histidine 283 contributes to the heme b binding site.

Belongs to the peroxidase family. Peroxidase/catalase subfamily. Homodimer or homotetramer. Requires heme b as cofactor. In terms of processing, formation of the three residue Trp-Tyr-Met cross-link is important for the catalase, but not the peroxidase activity of the enzyme.

It localises to the cytoplasm. It carries out the reaction H2O2 + AH2 = A + 2 H2O. It catalyses the reaction 2 H2O2 = O2 + 2 H2O. Its function is as follows. Bifunctional enzyme with both catalase and broad-spectrum peroxidase activity. The polypeptide is Catalase-peroxidase (Aspergillus fumigatus (strain CBS 144.89 / FGSC A1163 / CEA10) (Neosartorya fumigata)).